A 96-amino-acid chain; its full sequence is Large ribosomal subunit protein uL23 (96 aa).

Belongs to the universal ribosomal protein uL23 family. In terms of assembly, part of the 50S ribosomal subunit. Contacts protein L29, and trigger factor when it is bound to the ribosome.

One of the early assembly proteins it binds 23S rRNA. One of the proteins that surrounds the polypeptide exit tunnel on the outside of the ribosome. Forms the main docking site for trigger factor binding to the ribosome. In Halalkalibacterium halodurans (strain ATCC BAA-125 / DSM 18197 / FERM 7344 / JCM 9153 / C-125) (Bacillus halodurans), this protein is Large ribosomal subunit protein uL23.